Here is a 152-residue protein sequence, read N- to C-terminus: 3-dehydroquinate dehydratase (152 aa).

Residue tyrosine 26 is the Proton acceptor of the active site. Positions 78, 84, and 91 each coordinate substrate. The active-site Proton donor is histidine 104. Residues 105-106 and arginine 115 each bind substrate; that span reads LS.

It belongs to the type-II 3-dehydroquinase family. As to quaternary structure, homododecamer.

The enzyme catalyses 3-dehydroquinate = 3-dehydroshikimate + H2O. It functions in the pathway metabolic intermediate biosynthesis; chorismate biosynthesis; chorismate from D-erythrose 4-phosphate and phosphoenolpyruvate: step 3/7. Its function is as follows. Catalyzes a trans-dehydration via an enolate intermediate. This Idiomarina loihiensis (strain ATCC BAA-735 / DSM 15497 / L2-TR) protein is 3-dehydroquinate dehydratase.